A 374-amino-acid polypeptide reads, in one-letter code: Translocating chain-associated membrane protein 1 (374 aa).

The Cytoplasmic portion of the chain corresponds to 1-29 (MAIRKKSTKSPPVLSHEFVLQNHADIVSC). Residues 30–50 (VAMVFLLGLMFEITAKASIIF) form a helical membrane-spanning segment. Residues 51-76 (VTLQYNVTLPATEEQATESASLYYYG) are Lumenal-facing. N56 is a glycosylation site (N-linked (GlcNAc...) asparagine). A helical membrane pass occupies residues 77-97 (IKDLATVFFYMLVAIIIHAVI). At 98–121 (QEYMLDKINRRMHFSKTKHSKFNE) the chain is on the cytoplasmic side. One can recognise a TLC domain in the interval 117–326 (SKFNESGQLS…NFQLRRWREH (210 aa)). A helical transmembrane segment spans residues 122–142 (SGQLSAFYLFACVWGTFILIS). Residues 143–159 (ENYISDPTILWRAYPHN) lie on the Lumenal side of the membrane. The helical transmembrane segment at 160–180 (LMTFQMKFFYISQLAYWLHAF) threads the bilayer. Residues 181–192 (PELYFQKTKRED) lie on the Cytoplasmic side of the membrane. A helical membrane pass occupies residues 193–213 (IPRQLVYIGLYLFHIAGAYLL). A topological domain (lumenal) is located at residue N214. Residues 215-235 (LNHLGLVLLVLHYFVEFLFHI) traverse the membrane as a helical segment. At 236 to 251 (SRLFYFSNEKYQKGFS) the chain is on the cytoplasmic side. The helical transmembrane segment at 252 to 272 (LWAVLFVLGRLLTLILSVLTV) threads the bilayer. The Lumenal segment spans residues 273-297 (GFGLARAENQKLDFSTGNFNVLAVR). The helical transmembrane segment at 298–318 (IAVLASICITQAFMVWKFINF) threads the bilayer. The Cytoplasmic segment spans residues 319–374 (QLRRWREHSAFQAPAVKKKPTVTKGRSSKKGTENGVNGTLTSNVADSPRNKKEKSS). A compositionally biased stretch (basic residues) spans 334–347 (VKKKPTVTKGRSSK). Positions 334–374 (VKKKPTVTKGRSSKKGTENGVNGTLTSNVADSPRNKKEKSS) are disordered. A compositionally biased stretch (polar residues) spans 352–363 (NGVNGTLTSNVA). S365 bears the Phosphoserine mark.

Belongs to the TRAM family. Interacts with SEC61B. May interact with Derlin-1/DERL1. Post-translationally, N-glycosylated.

Its subcellular location is the endoplasmic reticulum membrane. In terms of biological role, involved in the translocation of nascent protein chains into or through the endoplasmic reticulum (ER) membrane by facilitating the proper chain positioning at the SEC61 channel. Regulates the exposure of nascent secretory protein chain to the cytosol during translocation into the ER. May affect the phospholipid bilayer in the vicinity of the lateral gate of the SEC61 channel, thereby facilitating ER protein transport. Intimately associates with transmembrane (TM) domain of nascent membrane proteins during the entire integration process into the ER membrane. Associates with the second TM domain of G-protein-coupled receptor opsin/OPSD nascent chain in the ER membrane, which may facilitate its integration into the membrane. Under conditions of ER stress, participates in the disposal of misfolded ER membrane proteins during the unfolded protein response (UPR), an integrated stress response (ISR) pathway, by selectively retrotranslocating misfolded ER-membrane proteins from the ER into the cytosol where they are ubiquitinated and degraded by the proteasome. This is Translocating chain-associated membrane protein 1 (TRAM1) from Pongo abelii (Sumatran orangutan).